Here is a 60-residue protein sequence, read N- to C-terminus: Three-finger toxin MS3 (60 aa).

4 cysteine pairs are disulfide-bonded: C3-C22, C15-C39, C41-C52, and C53-C58.

It belongs to the three-finger toxin family. Short-chain subfamily. Type I alpha-neurotoxin sub-subfamily. As to expression, expressed by the venom gland.

Its subcellular location is the secreted. Functionally, produces peripheral paralysis by blocking neuromuscular transmission at the postsynaptic site. Binds to and inhibits the endogenous nicotinic acetylcholine receptors (nAChR) in human rhabdomyosarcoma TE 671 cell line with an IC(50) of 346 mM. This neurotoxin is lethal to mice by intraperitoneal injection and to zebrafish by injection at the back of the dorsolateral region. This Micrurus surinamensis (Surinam coral snake) protein is Three-finger toxin MS3.